The sequence spans 342 residues: Cytoplasmic tRNA 2-thiolation protein 1 (342 aa).

It belongs to the TtcA family. CTU1/NCS6/ATPBD3 subfamily.

Its subcellular location is the cytoplasm. It participates in tRNA modification; 5-methoxycarbonylmethyl-2-thiouridine-tRNA biosynthesis. Plays a central role in 2-thiolation of mcm(5)S(2)U at tRNA wobble positions of tRNA(Lys), tRNA(Glu) and tRNA(Gln). Directly binds tRNAs and probably acts by catalyzing adenylation of tRNAs, an intermediate required for 2-thiolation. It is unclear whether it acts as a sulfurtransferase that transfers sulfur from thiocarboxylated URM1 onto the uridine of tRNAs at wobble position. This is Cytoplasmic tRNA 2-thiolation protein 1 from Anopheles gambiae (African malaria mosquito).